The sequence spans 379 residues: Succinyl-diaminopimelate desuccinylase (379 aa).

H70 lines the Zn(2+) pocket. D72 is an active-site residue. D103 serves as a coordination point for Zn(2+). E137 (proton acceptor) is an active-site residue. Zn(2+) is bound by residues E138, E166, and H352.

Belongs to the peptidase M20A family. DapE subfamily. Homodimer. Zn(2+) serves as cofactor. Requires Co(2+) as cofactor.

It catalyses the reaction N-succinyl-(2S,6S)-2,6-diaminopimelate + H2O = (2S,6S)-2,6-diaminopimelate + succinate. It participates in amino-acid biosynthesis; L-lysine biosynthesis via DAP pathway; LL-2,6-diaminopimelate from (S)-tetrahydrodipicolinate (succinylase route): step 3/3. Its function is as follows. Catalyzes the hydrolysis of N-succinyl-L,L-diaminopimelic acid (SDAP), forming succinate and LL-2,6-diaminopimelate (DAP), an intermediate involved in the bacterial biosynthesis of lysine and meso-diaminopimelic acid, an essential component of bacterial cell walls. This chain is Succinyl-diaminopimelate desuccinylase, found in Burkholderia multivorans (strain ATCC 17616 / 249).